The sequence spans 180 residues: Probable Brix domain-containing ribosomal biogenesis protein (180 aa).

The 178-residue stretch at Met-1–Arg-178 folds into the Brix domain.

Probably involved in the biogenesis of the ribosome. The polypeptide is Probable Brix domain-containing ribosomal biogenesis protein (Aeropyrum pernix (strain ATCC 700893 / DSM 11879 / JCM 9820 / NBRC 100138 / K1)).